We begin with the raw amino-acid sequence, 216 residues long: Elongation factor 1-beta (216 aa).

The tract at residues 71–131 is disordered; it reads GQASGVSASS…AKKKESGKSS (61 aa). Residues 73-89 show a composition bias toward low complexity; the sequence is ASGVSASSAPAAAAPAA. A compositionally biased stretch (acidic residues) spans 92 to 107; sequence DEDDDDDMDLFGDETE. Basic and acidic residues predominate over residues 108 to 128; that stretch reads EDKKAAAEREAAKPAKKKESG.

This sequence belongs to the EF-1-beta/EF-1-delta family. EF-1 is composed of 4 subunits: alpha, beta (1B-alpha=beta'), delta (1B-beta), and gamma (1B-gamma).

In terms of biological role, EF-1-beta and EF-1-beta' stimulate the exchange of GDP bound to EF-1-alpha to GTP. The protein is Elongation factor 1-beta of Triticum aestivum (Wheat).